We begin with the raw amino-acid sequence, 677 residues long: Protein hook (677 aa).

The Calponin-homology (CH) domain occupies 6 to 123 (NEMYYSLLEW…RLLQLVLGCA (118 aa)). 2 coiled-coil regions span residues 135–436 (EIMC…KCGH) and 478–588 (QTAL…AKEV).

It belongs to the hook family. As to quaternary structure, homodimer. Interacts with microtubules via its N-terminus.

The protein localises to the cytoplasm. The protein resides in the cytoskeleton. It is found in the endosome. It localises to the synapse. Involved in endocytic trafficking by stabilizing organelles of the endocytic pathway. Probably acts as a cytoskeletal linker protein required to tether endosome vesicles to the cytoskeleton. Involved in modulation of endocytosis at stages required for down-regulation of membrane proteins that control synapse size. Not involved in synaptic vesicle recycling. Required in R7 cells for boss endocytosis into multivesicular bodies (MVBs). Has a role in regulating adult longevity. The polypeptide is Protein hook (Drosophila pseudoobscura pseudoobscura (Fruit fly)).